Reading from the N-terminus, the 30-residue chain is Cyclotide vdif-A (30 aa).

Residues 1 to 30 (GIPCGESCVFIPCISSVVGCSCKSKVCYRN) constitute a cross-link (cyclopeptide (Gly-Asn)). Cystine bridges form between Cys-4–Cys-20, Cys-8–Cys-22, and Cys-13–Cys-27.

It belongs to the cyclotide family. Bracelet subfamily. Post-translationally, this is a cyclic peptide.

In terms of biological role, probably participates in a plant defense mechanism. The sequence is that of Cyclotide vdif-A from Viola diffusa.